We begin with the raw amino-acid sequence, 200 residues long: Snake venom metalloproteinase BmooMP-I (200 aa).

In terms of domain architecture, Peptidase M12B spans 5 to 200 (RYIELAVVAD…HNPQCILNEP (196 aa)). Ca(2+) is bound by residues E8 and D92. 3 cysteine pairs are disulfide-bonded: C116/C195, C155/C179, and C157/C162. H141 contacts Zn(2+). Residue E142 is part of the active site. Positions 145 and 151 each coordinate Zn(2+). The Ca(2+) site is built by C195 and N198.

The protein belongs to the venom metalloproteinase (M12B) family. P-I subfamily. Monomer. Requires Zn(2+) as cofactor. In terms of tissue distribution, expressed by the venom gland.

The protein localises to the secreted. In terms of biological role, zinc metalloprotease that displays fibrinogenolytic, gelatinase and weak hemorrhagic activities. Degrades the three chain of fibrinogen Aalpha-chain (FGA), Bbeta-chain (FGB), and gamma (FGG). This chain is Snake venom metalloproteinase BmooMP-I, found in Bothrops moojeni (Lance-headed viper).